The sequence spans 303 residues: UDP-3-O-acyl-N-acetylglucosamine deacetylase (303 aa).

Zn(2+) is bound by residues His-78, His-237, and Asp-241. His-264 serves as the catalytic Proton donor.

The protein belongs to the LpxC family. Requires Zn(2+) as cofactor.

The catalysed reaction is a UDP-3-O-[(3R)-3-hydroxyacyl]-N-acetyl-alpha-D-glucosamine + H2O = a UDP-3-O-[(3R)-3-hydroxyacyl]-alpha-D-glucosamine + acetate. Its pathway is glycolipid biosynthesis; lipid IV(A) biosynthesis; lipid IV(A) from (3R)-3-hydroxytetradecanoyl-[acyl-carrier-protein] and UDP-N-acetyl-alpha-D-glucosamine: step 2/6. Functionally, catalyzes the hydrolysis of UDP-3-O-myristoyl-N-acetylglucosamine to form UDP-3-O-myristoylglucosamine and acetate, the committed step in lipid A biosynthesis. This is UDP-3-O-acyl-N-acetylglucosamine deacetylase from Pseudomonas fluorescens (strain ATCC BAA-477 / NRRL B-23932 / Pf-5).